Consider the following 670-residue polypeptide: tRNA 5-methylaminomethyl-2-thiouridine biosynthesis bifunctional protein MnmC (670 aa).

Residues 1-242 (MTFSVQHAEI…KRECLSGLKI (242 aa)) form a tRNA (mnm(5)s(2)U34)-methyltransferase region. The segment at 269-670 (IGGGIASLCA…KKWLKGSKVE (402 aa)) is FAD-dependent cmnm(5)s(2)U34 oxidoreductase.

This sequence in the N-terminal section; belongs to the methyltransferase superfamily. tRNA (mnm(5)s(2)U34)-methyltransferase family. In the C-terminal section; belongs to the DAO family. It depends on FAD as a cofactor.

It localises to the cytoplasm. It carries out the reaction 5-aminomethyl-2-thiouridine(34) in tRNA + S-adenosyl-L-methionine = 5-methylaminomethyl-2-thiouridine(34) in tRNA + S-adenosyl-L-homocysteine + H(+). Its function is as follows. Catalyzes the last two steps in the biosynthesis of 5-methylaminomethyl-2-thiouridine (mnm(5)s(2)U) at the wobble position (U34) in tRNA. Catalyzes the FAD-dependent demodification of cmnm(5)s(2)U34 to nm(5)s(2)U34, followed by the transfer of a methyl group from S-adenosyl-L-methionine to nm(5)s(2)U34, to form mnm(5)s(2)U34. The sequence is that of tRNA 5-methylaminomethyl-2-thiouridine biosynthesis bifunctional protein MnmC from Haemophilus influenzae (strain PittGG).